The following is a 244-amino-acid chain: Histone H1, orphon (244 aa).

The segment covering Met1–Pro21 has biased composition (low complexity). Disordered stretches follow at residues Met1–Glu59 and Gln113–Lys244. Residues Pro35–Pro45 show a composition bias toward basic and acidic residues. One can recognise an H15 domain in the interval Thr53–Pro127. Over residues Ala186 to Pro203 the composition is skewed to low complexity. Basic residues predominate over residues Ala213–Lys244.

Belongs to the histone H1/H5 family.

The protein localises to the nucleus. It is found in the chromosome. Histones H1 are necessary for the condensation of nucleosome chains into higher-order structures. The chain is Histone H1, orphon from Chironomus thummi thummi (Midge).